Here is a 146-residue protein sequence, read N- to C-terminus: Allograft inflammatory factor 1 (146 aa).

At S1 the chain carries N-acetylserine. K10 is subject to N6-acetyllysine. S38 carries the phosphoserine modification. One can recognise an EF-hand 1 domain in the interval 44–79 (RKLEAFKQKYMEFDLNGNGDIDIMSLKRMLEKLGVP). 5 residues coordinate Ca(2+): D57, N59, N61, D63, and T99. The EF-hand 2; degenerate domain occupies 81 to 115 (THLELKKLIKEVSSGSGETFSYSIFLKMMLGKRSA). The tract at residues 127-146 (AREQEKPTGPPAKKAISELP) is disordered.

In terms of assembly, homodimer (Potential). Monomer. Interacts with LCP1. As to expression, microglial cells in the central nervous system and dendritic cells and macrophages in several organs.

It is found in the cytoplasm. It localises to the cytoskeleton. The protein localises to the cell projection. Its subcellular location is the ruffle membrane. The protein resides in the phagocytic cup. Its function is as follows. Actin-binding protein that enhances membrane ruffling and RAC activation. Enhances the actin-bundling activity of LCP1. Binds calcium. Plays a role in RAC signaling and in phagocytosis. May play a role in macrophage activation and function. Promotes the proliferation of vascular smooth muscle cells and of T-lymphocytes. Enhances lymphocyte migration. Plays a role in vascular inflammation. Has a dual influence on glucose-induced insulin secretion: inhibition at low concentration and stimulation at high concentrations. The sequence is that of Allograft inflammatory factor 1 (AIF1) from Sus scrofa (Pig).